Consider the following 539-residue polypeptide: Phosphoenolpyruvate carboxykinase (ATP) (539 aa).

Arg-64, Tyr-206, and Lys-212 together coordinate substrate. ATP is bound by residues Lys-212, His-231, and 247-255; that span reads GLSGTGKTT. Positions 212 and 231 each coordinate Mn(2+). Asp-268 is a Mn(2+) binding site. ATP-binding positions include Glu-296, Arg-332, 448–449, and Thr-454; that span reads RI. Substrate is bound at residue Arg-332.

This sequence belongs to the phosphoenolpyruvate carboxykinase (ATP) family. Monomer. Mn(2+) is required as a cofactor.

The protein resides in the cytoplasm. It carries out the reaction oxaloacetate + ATP = phosphoenolpyruvate + ADP + CO2. Its pathway is carbohydrate biosynthesis; gluconeogenesis. In terms of biological role, involved in the gluconeogenesis. Catalyzes the conversion of oxaloacetate (OAA) to phosphoenolpyruvate (PEP) through direct phosphoryl transfer between the nucleoside triphosphate and OAA. This chain is Phosphoenolpyruvate carboxykinase (ATP), found in Yersinia pseudotuberculosis serotype IB (strain PB1/+).